Here is a 116-residue protein sequence, read N- to C-terminus: Large ribosomal subunit protein bL17 (116 aa).

This sequence belongs to the bacterial ribosomal protein bL17 family. As to quaternary structure, part of the 50S ribosomal subunit. Contacts protein L32.

This Trichodesmium erythraeum (strain IMS101) protein is Large ribosomal subunit protein bL17.